We begin with the raw amino-acid sequence, 289 residues long: 4-hydroxy-tetrahydrodipicolinate synthase (289 aa).

Pyruvate is bound at residue T43. Y131 acts as the Proton donor/acceptor in catalysis. K160 functions as the Schiff-base intermediate with substrate in the catalytic mechanism. Residue I200 participates in pyruvate binding.

It belongs to the DapA family. Homotetramer; dimer of dimers.

It localises to the cytoplasm. It catalyses the reaction L-aspartate 4-semialdehyde + pyruvate = (2S,4S)-4-hydroxy-2,3,4,5-tetrahydrodipicolinate + H2O + H(+). It functions in the pathway amino-acid biosynthesis; L-lysine biosynthesis via DAP pathway; (S)-tetrahydrodipicolinate from L-aspartate: step 3/4. Its function is as follows. Catalyzes the condensation of (S)-aspartate-beta-semialdehyde [(S)-ASA] and pyruvate to 4-hydroxy-tetrahydrodipicolinate (HTPA). This is 4-hydroxy-tetrahydrodipicolinate synthase from Methanococcus vannielii (strain ATCC 35089 / DSM 1224 / JCM 13029 / OCM 148 / SB).